Here is a 205-residue protein sequence, read N- to C-terminus: Small ribosomal subunit protein uS4 (205 aa).

The disordered stretch occupies residues N18–G49. In terms of domain architecture, S4 RNA-binding spans R94 to N157.

This sequence belongs to the universal ribosomal protein uS4 family. As to quaternary structure, part of the 30S ribosomal subunit. Contacts protein S5. The interaction surface between S4 and S5 is involved in control of translational fidelity.

One of the primary rRNA binding proteins, it binds directly to 16S rRNA where it nucleates assembly of the body of the 30S subunit. Functionally, with S5 and S12 plays an important role in translational accuracy. This Nitrobacter hamburgensis (strain DSM 10229 / NCIMB 13809 / X14) protein is Small ribosomal subunit protein uS4.